The sequence spans 136 residues: ATP synthase epsilon chain (136 aa).

This sequence belongs to the ATPase epsilon chain family. As to quaternary structure, F-type ATPases have 2 components, CF(1) - the catalytic core - and CF(0) - the membrane proton channel. CF(1) has five subunits: alpha(3), beta(3), gamma(1), delta(1), epsilon(1). CF(0) has three main subunits: a, b and c.

It localises to the cell membrane. Functionally, produces ATP from ADP in the presence of a proton gradient across the membrane. In Herpetosiphon aurantiacus (strain ATCC 23779 / DSM 785 / 114-95), this protein is ATP synthase epsilon chain.